We begin with the raw amino-acid sequence, 152 residues long: UPF0756 membrane protein Helmi_09930 (152 aa).

5 helical membrane passes run 6–26 (VLLI…TALA), 52–72 (TGLI…KVGL), 75–95 (VLLS…VLAT), 111–131 (IIVG…GIPV), and 132–152 (GPLM…WLSK).

It belongs to the UPF0756 family.

Its subcellular location is the cell membrane. In Heliobacterium modesticaldum (strain ATCC 51547 / Ice1), this protein is UPF0756 membrane protein Helmi_09930.